Reading from the N-terminus, the 448-residue chain is Methylenetetrahydrofolate--tRNA-(uracil-5-)-methyltransferase TrmFO (448 aa).

10–15 contributes to the FAD binding site; the sequence is GAGLAG.

This sequence belongs to the MnmG family. TrmFO subfamily. The cofactor is FAD.

It localises to the cytoplasm. The enzyme catalyses uridine(54) in tRNA + (6R)-5,10-methylene-5,6,7,8-tetrahydrofolate + NADH + H(+) = 5-methyluridine(54) in tRNA + (6S)-5,6,7,8-tetrahydrofolate + NAD(+). It catalyses the reaction uridine(54) in tRNA + (6R)-5,10-methylene-5,6,7,8-tetrahydrofolate + NADPH + H(+) = 5-methyluridine(54) in tRNA + (6S)-5,6,7,8-tetrahydrofolate + NADP(+). Its function is as follows. Catalyzes the folate-dependent formation of 5-methyl-uridine at position 54 (M-5-U54) in all tRNAs. This is Methylenetetrahydrofolate--tRNA-(uracil-5-)-methyltransferase TrmFO from Lactococcus lactis subsp. cremoris (strain SK11).